The following is a 485-amino-acid chain: ETS translocation variant 4 (485 aa).

K6 participates in a covalent cross-link: Glycyl lysine isopeptide (Lys-Gly) (interchain with G-Cter in SUMO2). Disordered stretches follow at residues 79–114 (PDFHSENSFHSPTTRIKKEPQSPRTDPALSCSRKPP) and 135–214 (IAIK…QHQL). K95 participates in a covalent cross-link: Glycyl lysine isopeptide (Lys-Gly) (interchain with G-Cter in SUMO). At S100 the chain carries Phosphoserine. K138 is covalently cross-linked (Glycyl lysine isopeptide (Lys-Gly) (interchain with G-Cter in SUMO2)). A phosphoserine mark is found at S139 and S148. Positions 158 to 171 (QQQSLLRASSSSQS) are enriched in low complexity. The residue at position 215 (S215) is a Phosphoserine. Glycyl lysine isopeptide (Lys-Gly) (interchain with G-Cter in SUMO) cross-links involve residues K227 and K261. K323 participates in a covalent cross-link: Glycyl lysine isopeptide (Lys-Gly) (interchain with G-Cter in SUMO2). The segment at residues 342–422 (LQLWQFLVAL…AGERYVYKFV (81 aa)) is a DNA-binding region (ETS).

It belongs to the ETS family. Post-translationally, sumoylated; enhanced upon ERK/MAP kinase pathway activation it positively regulates the transcriptional activator capacity. Sumoylation at Lys-95 probably requires phosphorylation at Ser-100. Transiently polysumoylated and desumoylated by SENP1. Sumoylation is a prerequisite to polyubiquitination which in turn increases proteasomal-mediated degradation. Probably polyubiquitinated by RNF4 and deubiquitinated by USP2. As to expression, epididymis and brain.

Its subcellular location is the nucleus. In terms of biological role, transcriptional activator. May play a role in keratinocyte differentiation. This chain is ETS translocation variant 4 (Etv4), found in Mus musculus (Mouse).